The chain runs to 451 residues: SH2 domain-containing protein 7 (451 aa).

One can recognise an SH2 domain in the interval 51–142; the sequence is WFHGFITRKQ…PFKEMLTAAC (92 aa). 3 disordered regions span residues 180-232, 256-321, and 408-436; these read KAAS…SLLE, LGTE…SDAM, and GTPELSEPGNTYEQIPATKSKETGRTHKP. Positions 221 to 232 are enriched in low complexity; sequence SPLPEKSSSLLE. Residues 279–291 show a composition bias toward basic and acidic residues; that stretch reads EAQRRLSDGEQNR. Residues 306 to 316 are compositionally biased toward polar residues; sequence QGPTESPTSWG. Residues 426–436 show a composition bias toward basic and acidic residues; the sequence is KSKETGRTHKP.

In Homo sapiens (Human), this protein is SH2 domain-containing protein 7 (SH2D7).